A 202-amino-acid chain; its full sequence is Ribonuclease HII (202 aa).

Residues 12–201 (LLIAGVDEAG…VRQLKLFIPE (190 aa)) enclose the RNase H type-2 domain. Positions 18, 19, and 110 each coordinate a divalent metal cation.

It belongs to the RNase HII family. Mn(2+) serves as cofactor. Mg(2+) is required as a cofactor.

The protein localises to the cytoplasm. The catalysed reaction is Endonucleolytic cleavage to 5'-phosphomonoester.. Functionally, endonuclease that specifically degrades the RNA of RNA-DNA hybrids. This chain is Ribonuclease HII, found in Coxiella burnetii (strain CbuK_Q154) (Coxiella burnetii (strain Q154)).